The following is a 114-amino-acid chain: Gas vesicle protein J1 (114 aa).

The alpha helix 1 stretch occupies residues 13 to 22; it reads LAEMLEMLLD. 2 beta-strand regions span residues 25 to 35 and 40 to 50; these read VVVNADIAVSV and LLGIELRAAIA. The Conserved in GvpM1/2 but not GvpA signature appears at 46–50; it reads RAAIA. Alpha helix stretches follow at residues 52-72, 78-87, and 95-105; these read FETA…ERVE, SPDQSDPASE, and TNPLSDDSTPT. Residues 63 to 114 are disordered; it reads PTGTDMERVESAANISPDQSDPASETQSETESTNPLSDDSTPTASTSAEETK. The segment covering 75-98 has biased composition (polar residues); that stretch reads ANISPDQSDPASETQSETESTNPL. The segment covering 99-114 has biased composition (low complexity); that stretch reads SDDSTPTASTSAEETK.

It belongs to the gas vesicle GvpA family. GvpF to GvpM interact with each other in vitro, and may form multi-subunit complex(es). Interacts with GvpA1.

It is found in the gas vesicle. Functionally, proteins GvpF to GvpM might be involved in nucleating gas vesicle formation. Mutagenesis of residues 13-61 shows that almost none of them can be substituted and still make gas vesicles. A minor component of the gas vesicle. Gas vesicles are hollow, gas filled proteinaceous nanostructures found in several microbial planktonic microorganisms. They allow positioning of halobacteria at the optimal depth for growth in the poorly aerated, shallow brine pools of their habitat. In terms of biological role, expression of a 9.5 kb p-vac DNA fragment containing 2 divergently transcribed regions (gvpD-gvpE-gvpF-gvpG-gvpH-gvpI-gvpJ-gvpK-gvpL-gvpM and gvpA-gvpC-gvpN-gvpO) allows H.volcanii to produce gas vesicles. All site-directed mutagenesis is tested in H.volcanii. A minimal gas vesicle can be made in H.volcanii by gvpA1-gvpO1 plus gvpF1-gvpG1-gvpJ1-gvpK1-gvpL1-gvpM1; lack of enough GvpJ1 prevents formation. A similar region restores gas vesicle production in H.halobium without the p-vac locus, but it still has the c-vac locus. The polypeptide is Gas vesicle protein J1 (gvpJ11) (Halobacterium salinarum (strain ATCC 700922 / JCM 11081 / NRC-1) (Halobacterium halobium)).